Consider the following 392-residue polypeptide: Telomere-binding protein subunit beta (392 aa).

A disordered region spans residues Q234–K392. The span at G247–A256 shows a compositional bias: basic residues. Residues T257–K268 show a composition bias toward low complexity. Over residues K269–V284 the composition is skewed to basic and acidic residues. Residues S328–M343 are compositionally biased toward polar residues. A compositionally biased stretch (low complexity) spans G374–S384.

Heterodimer of an alpha and a beta subunit.

The protein localises to the nucleus. Its subcellular location is the chromosome. It localises to the telomere. May function as protective capping of the single-stranded telomeric overhang. May also participate in telomere length regulation during DNA replication. The protein is Telomere-binding protein subunit beta (STY43) of Stylonychia mytilus (Ciliate).